A 514-amino-acid chain; its full sequence is Ferrochelatase-2, chloroplastic (514 aa).

Belongs to the ferrochelatase family.

The protein resides in the plastid. Its subcellular location is the chloroplast. It carries out the reaction heme b + 2 H(+) = protoporphyrin IX + Fe(2+). The protein operates within porphyrin-containing compound metabolism; protoheme biosynthesis; protoheme from protoporphyrin-IX: step 1/1. Functionally, catalyzes the ferrous insertion into protoporphyrin IX. This Cucumis sativus (Cucumber) protein is Ferrochelatase-2, chloroplastic (HEMH).